Here is a 101-residue protein sequence, read N- to C-terminus: MNSHFVSAHTPFYINTKEGRYLVLKAVKVCDVRTVECEGSKASCVLKVDKPSSPTCERRPSSPSRCERMNNPGKQVPFMRTDMLQNMFAANRDNVTSRLLN.

A disordered region spans residues 50 to 73 (KPSSPTCERRPSSPSRCERMNNPG). The span at 56 to 68 (CERRPSSPSRCER) shows a compositional bias: basic and acidic residues.

Belongs to the orthopoxvirus OPG062 family. As to quaternary structure, self-associates to form high molecular-weight forms. Interacts with protein OPG157. Interacts with host RICTOR and RPTOR; these interactions disrupt the mTORC1 and mTORC2 crosstalk.

It localises to the virion. In terms of biological role, plays an essential role in virion assembly and morphogenesis. Also plays a role in the inhibition of host immune response by dysregulating mTOR. Sequesters host RICTOR and RPTOR, thereby disrupting mTORC1 and mTORC2 crosstalk. In turn, blocks the host antiviral response in part through mTOR-dependent degradation of cGAS, the primary poxvirus sensor. This is Phosphoprotein OPG062 (OPG062) from Monkeypox virus.